A 151-amino-acid polypeptide reads, in one-letter code: Large ribosomal subunit protein bL9 (151 aa).

This sequence belongs to the bacterial ribosomal protein bL9 family.

Functionally, binds to the 23S rRNA. The protein is Large ribosomal subunit protein bL9 of Chloroherpeton thalassium (strain ATCC 35110 / GB-78).